A 422-amino-acid polypeptide reads, in one-letter code: 3-isopropylmalate dehydratase large subunit (422 aa).

3 residues coordinate [4Fe-4S] cluster: C294, C354, and C357.

This sequence belongs to the aconitase/IPM isomerase family. LeuC type 2 subfamily. In terms of assembly, heterodimer of LeuC and LeuD. The cofactor is [4Fe-4S] cluster.

It catalyses the reaction (2R,3S)-3-isopropylmalate = (2S)-2-isopropylmalate. It participates in amino-acid biosynthesis; L-leucine biosynthesis; L-leucine from 3-methyl-2-oxobutanoate: step 2/4. In terms of biological role, catalyzes the isomerization between 2-isopropylmalate and 3-isopropylmalate, via the formation of 2-isopropylmaleate. This chain is 3-isopropylmalate dehydratase large subunit, found in Mycolicibacterium smegmatis (strain ATCC 700084 / mc(2)155) (Mycobacterium smegmatis).